The chain runs to 213 residues: Orotate phosphoribosyltransferase (213 aa).

K26 serves as a coordination point for 5-phospho-alpha-D-ribose 1-diphosphate. 34–35 (FF) is an orotate binding site. 5-phospho-alpha-D-ribose 1-diphosphate is bound by residues 72–73 (YK), R99, K100, K103, H105, and 124–132 (DDVITAGTA). Orotate-binding residues include T128 and R156.

Belongs to the purine/pyrimidine phosphoribosyltransferase family. PyrE subfamily. Homodimer. The cofactor is Mg(2+).

It catalyses the reaction orotidine 5'-phosphate + diphosphate = orotate + 5-phospho-alpha-D-ribose 1-diphosphate. It functions in the pathway pyrimidine metabolism; UMP biosynthesis via de novo pathway; UMP from orotate: step 1/2. In terms of biological role, catalyzes the transfer of a ribosyl phosphate group from 5-phosphoribose 1-diphosphate to orotate, leading to the formation of orotidine monophosphate (OMP). This Serratia proteamaculans (strain 568) protein is Orotate phosphoribosyltransferase.